Here is a 232-residue protein sequence, read N- to C-terminus: Small ribosomal subunit protein uS2 (232 aa).

Belongs to the universal ribosomal protein uS2 family.

The sequence is that of Small ribosomal subunit protein uS2 from Natranaerobius thermophilus (strain ATCC BAA-1301 / DSM 18059 / JW/NM-WN-LF).